A 311-amino-acid polypeptide reads, in one-letter code: Pyrimidine-specific ribonucleoside hydrolase RihA (311 aa).

The active site involves His-240.

It belongs to the IUNH family. RihA subfamily.

Its function is as follows. Hydrolyzes cytidine or uridine to ribose and cytosine or uracil, respectively. The chain is Pyrimidine-specific ribonucleoside hydrolase RihA from Klebsiella pneumoniae subsp. pneumoniae (strain ATCC 700721 / MGH 78578).